The sequence spans 454 residues: Neuronal acetylcholine receptor subunit alpha-5 (454 aa).

The disordered stretch occupies residues 1–26; the sequence is MPLRARSRKPGAGPAARAPQAGVSEP. A signal peptide spans 1 to 29; sequence MPLRARSRKPGAGPAARAPQAGVSEPSFV. Positions 10–22 are enriched in low complexity; that stretch reads PGAGPAARAPQAG. The Extracellular portion of the chain corresponds to 30-240; it reads AKSEDRLFKH…IIRRLPLFYT (211 aa). N-linked (GlcNAc...) asparagine glycans are attached at residues N55, N169, and N215. C156 and C170 are oxidised to a cystine. Residues C220 and C221 are joined by a disulfide bond. 3 helical membrane passes run 241 to 261, 270 to 290, and 303 to 323; these read LFLIIPCIGLSFLTVLVFYLP, LCTSVLVSLTVFLLVIEEIIP, and LVFTMIFVTLSIVITVFAINI. Residues 324 to 416 lie on the Cytoplasmic side of the membrane; sequence HHRSSSTHNA…KFIAQVLDRM (93 aa). The helical transmembrane segment at 417-437 threads the bilayer; sequence FLWAFLLVSIIGSLVLFIPVI. Residues 438–454 lie on the Extracellular side of the membrane; the sequence is HKWASIIVPVHIGSTNT.

The protein belongs to the ligand-gated ion channel (TC 1.A.9) family. Acetylcholine receptor (TC 1.A.9.1) subfamily. Alpha-5/CHRNA5 sub-subfamily. In terms of assembly, neuronal AChR that forms heteropentamers composed of two different type of subunits: alpha and non-alpha (beta). CHRNA5/alpha-5 subunit is only able to form functional nAChRs when co-assembled with another alpha subunit, can be combined to CHRNA4/alpha-4 or CHRNA3/alpha-3 and CHRNB4/beta-4 or CHRNB2/beta-2 to give rise to functional receptors. Interacts with LYPD6.

It localises to the synaptic cell membrane. The protein localises to the cell membrane. It carries out the reaction Ca(2+)(in) = Ca(2+)(out). The catalysed reaction is K(+)(in) = K(+)(out). The enzyme catalyses Na(+)(in) = Na(+)(out). Its activity is regulated as follows. Activated by a myriad of ligands such as acetylcholine, cytisine, nicotine, choline and epibatidine. In terms of biological role, component of neuronal acetylcholine receptors (nAChRs) that function as pentameric, ligand-gated cation channels with high calcium permeability among other activities. nAChRs are excitatory neurotrasnmitter receptors formed by a collection of nAChR subunits known to mediate synaptic transmission in the nervous system and the neuromuscular junction. Each nAchR subunit confers differential attributes to channel properties, including activation, deactivation and desensitization kinetics, pH sensitivity, cation permeability, and binding to allosteric modulators. Has an accessory rather than functional role and is only able to form functional nAChRs when co-assembled with another beta subunit. Participates in pentameric assemblies along with CHRNA3, CHRNA4, CHRNB2 and CHRNB4. Increases receptor sensitivity to acetylcholine and nicotine when associated with CHRNA4 and CHRNB2. Plays a role in nicotine addiction. The chain is Neuronal acetylcholine receptor subunit alpha-5 (CHRNA5) from Gallus gallus (Chicken).